Here is a 509-residue protein sequence, read N- to C-terminus: Ribonuclease Y (509 aa).

A helical transmembrane segment spans residues 5–25; that stretch reads IIILLSVFCGIFFICFIICSS. Residues 199 to 259 enclose the KH domain; sequence TTNIVKLPSD…IRREIATRTL (61 aa). The HD domain occupies 325–418; that stretch reads VLAHSIEVAK…VAIADSISAS (94 aa).

Belongs to the RNase Y family.

The protein localises to the cell membrane. Functionally, endoribonuclease that initiates mRNA decay. This chain is Ribonuclease Y, found in Mycoplasma capricolum subsp. capricolum (strain California kid / ATCC 27343 / NCTC 10154).